The sequence spans 1041 residues: Cullin-associated NEDD8-dissociated protein 1, C-terminal part (1041 aa).

Disordered stretches follow at residues 1 to 24 (MSSD…ELRE) and 64 to 103 (DMGE…EGGY). Residues 9 to 24 (YSHDDEHDPQTDELRE) show a composition bias toward basic and acidic residues. The span at 65–103 (MGEDEEMSGTQDDGSEDDVTEEPDLEDDDFEDFEEEGGY) shows a compositional bias: acidic residues. One copy of the HEAT 1 repeat lies at 138–176 (SLYQQIAPAIVARFNKEREESVKLELVSTMDALVRKTAE). The segment at 189–237 (SVGSGSKISRKRRRQDSDASMIDFEPSMGTSSAAGTPLAAPSSPQSGPQ) is disordered. Residues 225–237 (PLAAPSSPQSGPQ) show a composition bias toward low complexity. HEAT repeat units follow at residues 242-279 (NALP…VRYG), 339-376 (PFLI…ALTP), 434-472 (LSFE…LCSR), 479-516 (NWVR…NPNT), 525-560 (MKNL…GNAQ), 598-637 (GSGL…NVGV), 670-708 (GASC…GNVK), 710-744 (YLPT…MVRR), 780-817 (LDPP…DSRD), and 822-867 (VLRP…HLGE).

It belongs to the CAND family. As to quaternary structure, interacts with candA-N. Interacts with unneddylated cullins culA and culD.

It localises to the nucleus. Its function is as follows. Assembly factor of SCF (SKP1-CUL1-F-box protein) E3 ubiquitin ligase complexes that promotes the exchange of the substrate-recognition F-box subunit in SCF complexes, thereby playing a key role in the cellular repertoire of SCF complexes. Acts as a F-box protein exchange factor when interacting with candA-N. The chain is Cullin-associated NEDD8-dissociated protein 1, C-terminal part (candA-C) from Emericella nidulans (strain FGSC A4 / ATCC 38163 / CBS 112.46 / NRRL 194 / M139) (Aspergillus nidulans).